A 2261-amino-acid polypeptide reads, in one-letter code: MACWPQLRLLLWKNLTFRRRQTCQLLLEVAWPLFIFLILISVRLSYPPYEQHECHFPNKAMPSAGTLPWVQGIICNANNPCFRYPTPGEAPGVVGNFNKSIVARLFSDARRLLLYSQKDTSMKDMRKVLRTLQQIKKSSSNLKLQDFLVDNETFSGFLYHNLSLPKSTVDKMLRADVILHKVFLQGYQLHLTSLCNGSKSEEMIQLGDQEVSELCGLPREKLAAAERVLRSNMDILKPILRTLNSTSPFPSKELAEATKTLLHSLGTLAQELFSMRSWSDMRQEVMFLTNVNSSSSSTQIYQAVSRIVCGHPEGGGLKIKSLNWYEDNNYKALFGGNGTEEDAETFYDNSTTPYCNDLMKNLESSPLSRIIWKALKPLLVGKILYTPDTPATRQVMAEVNKTFQELAVFHDLEGMWEELSPKIWTFMENSQEMDLVRMLLDSRDNDHFWEQQLDGLDWTAQDIVAFLAKHPEDVQSSNGSVYTWREAFNETNQAIRTISRFMECVNLNKLEPIATEVWLINKSMELLDERKFWAGIVFTGITPGSIELPHHVKYKIRMDIDNVERTNKIKDGYWDPGPRADPFEDMRYVWGGFAYLQDVVEQAIIRVLTGTEKKTGVYMQQMPYPCYVDDIFLRVMSRSMPLFMTLAWIYSVAVIIKGIVYEKEARLKETMRIMGLDNSILWFSWFISSLIPLLVSAGLLVVILKLGNLLPYSDPSVVFVFLSVFAVVTILQCFLISTLFSRANLAAACGGIIYFTLYLPYVLCVAWQDYVGFTLKIFASLLSPVAFGFGCEYFALFEEQGIGVQWDNLFESPVEEDGFNLTTSVSMMLFDTFLYGVMTWYIEAVFPGQYGIPRPWYFPCTKSYWFGEESDEKSHPGSNQKRISEICMEEEPTHLKLGVSIQNLVKVYRDGMKVAVDGLALNFYEGQITSFLGHNGAGKTTTMSILTGLFPPTSGTAYILGKDIRSEMSTIRQNLGVCPQHNVLFDMLTVEEHIWFYARLKGLSEKHVKAEMEQMALDVGLPSSKLKSKTSQLSGGMQRKLSVALAFVGGSKVVILDEPTAGVDPYSRRGIWELLLKYRQGRTIILSTHHMDEADVLGDRIAIISHGKLCCVGSSLFLKNQLGTGYYLTLVKKDVESSLSSCRNSSSTVSYLKKEDSVSQSSSDAGLGSDHESDTLTIDVSAISNLIRKHVSEARLVEDIGHELTYVLPYEAAKEGAFVELFHEIDDRLSDLGISSYGISETTLEEIFLKVAEESGVDAETSDGTLPARRNRRAFGDKQSCLRPFTEDDAADPNDSDIDPESRETDLLSGMDGKGSYQVKGWKLTQQQFVALLWKRLLIARRSRKGFFAQIVLPAVFVCIALVFSLIVPPFGKYPSLELQPWMYNEQYTFVSNDAPEDTGTLELLNALTKDPGFGTRCMEGNPIPDTPCQAGEEEWTTAPVPQTIMDLFQNGNWTMQNPSPACQCSSDKIKKMLPVCPPGAGGLPPPQRKQNTADILQDLTGRNISDYLVKTYVQIIAKSLKNKIWVNEFRYGGFSLGVSNTQALPPSQEVNDAIKQMKKHLKLAKDSSADRFLNSLGRFMTGLDTKNNVKVWFNNKGWHAISSFLNVINNAILRANLQKGENPSHYGITAFNHPLNLTKQQLSEVALMTTSVDVLVSICVIFAMSFVPASFVVFLIQERVSKAKHLQFISGVKPVIYWLSNFVWDMCNYVVPATLVIIIFICFQQKSYVSSTNLPVLALLLLLYGWSITPLMYPASFVFKIPSTAYVVLTSVNLFIGINGSVATFVLELFTDNKLNNINDILKSVFLIFPHFCLGRGLIDMVKNQAMADALERFGENRFVSPLSWDLVGRNLFAMAVEGVVFFLITVLIQYRFFIRPRPVNAKLSPLNDEDEDVRRERQRILDGGGQNDILEIKELTKIYRRKRKPAVDRICVGIPPGECFGLLGVNGAGKSSTFKMLTGDTTVTRGDAFLNKNSILSNIHEVHQNMGYCPQFDAITELLTGREHVEFFALLRGVPEKEVGKVGEWAIRKLGLVKYGEKYAGNYSGGNKRKLSTAMALIGGPPVVFLDEPTTGMDPKARRFLWNCALSVVKEGRSVVLTSHSMEECEALCTRMAIMVNGRFRCLGSVQHLKNRFGDGYTIVVRIAGSNPDLKPVQDFFGLAFPGSVLKEKHRNMLQYQLPSSLSSLARIFSILSQSKKRLHIEDYSVSQTTLDQVFVNFAKDQSDDDHLKDLSLHKNQTVVDVAVLTSFLQDEKVKESYV.

A lipid anchor (S-palmitoyl cysteine) is attached at Cys-3. Asn-14 is a glycosylation site (N-linked (GlcNAc...) asparagine). A helical membrane pass occupies residues 22-42 (TCQLLLEVAWPLFIFLILISV). Cys-23 carries S-palmitoyl cysteine lipidation. Over 43–639 (RLSYPPYEQH…DIFLRVMSRS (597 aa)) the chain is Extracellular. The interval 69 to 80 (WVQGIICNANNP) is annulus domain 1. An intrachain disulfide couples Cys-75 to Cys-309. N-linked (GlcNAc...) asparagine glycosylation is found at Asn-98, Asn-151, Asn-161, Asn-196, Asn-244, Asn-292, Asn-337, and Asn-349. The tract at residues 368-379 (SRIIWKALKPLL) is annulus domain 2. N-linked (GlcNAc...) asparagine glycosylation is found at Asn-400, Asn-478, Asn-489, and Asn-521. The segment at 564–594 (ERTNKIKDGYWDPGPRADPFEDMRYVWGGFA) is gateway domain. 5 consecutive transmembrane segments (helical) span residues 640–660 (MPLF…KGIV), 683–703 (FSWF…LVVI), 716–736 (SVVF…CFLI), 745–765 (LAAA…VLCV), and 777–797 (IFAS…FALF). N-linked (GlcNAc...) asparagine glycosylation occurs at Asn-820. The chain crosses the membrane as a helical span at residues 827 to 847 (MMLFDTFLYGVMTWYIEAVFP). The 233-residue stretch at 899-1131 (VSIQNLVKVY…LGTGYYLTLV (233 aa)) folds into the ABC transporter 1 domain. 933-940 (GHNGAGKT) is an ATP binding site. Residues 1041–1057 (LSVALAFVGGSKVVILD) form a helical membrane-spanning segment. Ser-1042 is modified (phosphoserine; by PKA). S-palmitoyl cysteine attachment occurs at residues Cys-1110 and Cys-1111. N-linked (GlcNAc...) asparagine glycans are attached at residues Asn-1144 and Asn-1294. A disordered region spans residues 1283 to 1312 (RPFTEDDAADPNDSDIDPESRETDLLSGMD). The segment covering 1287-1299 (EDDAADPNDSDID) has biased composition (acidic residues). Phosphoserine is present on Ser-1296. A helical transmembrane segment spans residues 1351-1371 (IVLPAVFVCIALVFSLIVPPF). The Extracellular segment spans residues 1372-1656 (GKYPSLELQP…ALMTTSVDVL (285 aa)). Asn-1453 carries an N-linked (GlcNAc...) asparagine glycan. Cys-1463 and Cys-1477 are oxidised to a cystine. Residues Asn-1504 and Asn-1637 are each glycosylated (N-linked (GlcNAc...) asparagine). 6 helical membrane-spanning segments follow: residues 1657–1677 (VSIC…VFLI), 1703–1723 (FVWD…IFIC), 1735–1755 (LPVL…LMYP), 1768–1788 (VVLT…TFVL), 1802–1822 (ILKS…LIDM), and 1852–1872 (NLFA…LIQY). Positions 1912 to 2144 (LEIKELTKIY…FGDGYTIVVR (233 aa)) constitute an ABC transporter 2 domain. Residue 1946-1953 (GVNGAGKS) coordinates ATP. The N-linked (GlcNAc...) asparagine glycan is linked to Asn-2044. Ser-2054 carries the post-translational modification Phosphoserine; by PKA. Asn-2238 carries N-linked (GlcNAc...) asparagine glycosylation.

This sequence belongs to the ABC transporter superfamily. ABCA family. In terms of assembly, interacts with MEGF10. May interact with APOE1; functionally associated with APOE1 in the biogenesis of HDLs. Interacts with ABCA8; this interaction potentiates cholesterol efflux. Interacts with ABCA12 and NR1H2; this interaction is required for ABCA1 localization to the cell surface and is necessary for its normal activity and stability. Post-translationally, phosphorylation on Ser-2054 regulates phospholipid efflux. Palmitoylated by ZDHHC8. Palmitoylation is essential for localization to the plasma membrane. In terms of tissue distribution, widely expressed, but most abundant in macrophages.

Its subcellular location is the cell membrane. The protein localises to the endosome. It catalyses the reaction ATP + H2O + phospholipidSide 1 = ADP + phosphate + phospholipidSide 2.. The enzyme catalyses a 1,2-diacyl-sn-glycero-3-phosphocholine(out) + ATP + H2O = a 1,2-diacyl-sn-glycero-3-phosphocholine(in) + ADP + phosphate + H(+). It carries out the reaction a 1,2-diacyl-sn-glycero-3-phospho-L-serine(out) + ATP + H2O = a 1,2-diacyl-sn-glycero-3-phospho-L-serine(in) + ADP + phosphate + H(+). The catalysed reaction is a sphingomyelin(in) + ATP + H2O = a sphingomyelin(out) + ADP + phosphate + H(+). It catalyses the reaction cholesterol(in) + ATP + H2O = cholesterol(out) + ADP + phosphate + H(+). ATPase activity is decreased by cholesterol and ceramide. ATPase activity is stimulated by phosphatidylcholine and to a lesser degree by phosphatidylserine and sphingomyelin. Phospholipid translocase activity is highly reduced by berylium fluoride and aluminum flouride and reduced by N-ethylmaleimide. Functionally, catalyzes the translocation of specific phospholipids from the cytoplasmic to the extracellular/lumenal leaflet of membrane coupled to the hydrolysis of ATP. Thereby, participates in phospholipid transfer to apolipoproteins to form nascent high density lipoproteins/HDLs. Transports preferentially phosphatidylcholine over phosphatidylserine. May play a similar role in the efflux of intracellular cholesterol to apolipoproteins and the formation of nascent high density lipoproteins/HDLs. Translocates phospholipids from the outer face of the plasma membrane and forces it through its gateway and annulus into an elongated hydrophobic tunnel in its extracellular domain. The polypeptide is Phospholipid-transporting ATPase ABCA1 (Homo sapiens (Human)).